The following is a 200-amino-acid chain: Probable GTP-binding protein EngB (200 aa).

The EngB-type G domain occupies 22–197; that stretch reads DLPEIAFAGR…WQAIQDAVEE (176 aa). GTP is bound by residues 30–37, 57–61, 78–81, 145–148, and 176–178; these read GRSNVGKS, GRTQL, DLPG, TKCD, and FSA. Positions 37 and 59 each coordinate Mg(2+).

It belongs to the TRAFAC class TrmE-Era-EngA-EngB-Septin-like GTPase superfamily. EngB GTPase family. Requires Mg(2+) as cofactor.

Necessary for normal cell division and for the maintenance of normal septation. This chain is Probable GTP-binding protein EngB, found in Trichlorobacter lovleyi (strain ATCC BAA-1151 / DSM 17278 / SZ) (Geobacter lovleyi).